We begin with the raw amino-acid sequence, 92 residues long: Putative regulatory protein CA_C1717 (92 aa).

This sequence belongs to the RemA family.

The protein is Putative regulatory protein CA_C1717 of Clostridium acetobutylicum (strain ATCC 824 / DSM 792 / JCM 1419 / IAM 19013 / LMG 5710 / NBRC 13948 / NRRL B-527 / VKM B-1787 / 2291 / W).